The following is a 132-amino-acid chain: Small ribosomal subunit protein uS8 (132 aa).

This sequence belongs to the universal ribosomal protein uS8 family. Part of the 30S ribosomal subunit. Contacts proteins S5 and S12.

One of the primary rRNA binding proteins, it binds directly to 16S rRNA central domain where it helps coordinate assembly of the platform of the 30S subunit. This chain is Small ribosomal subunit protein uS8, found in Alkaliphilus metalliredigens (strain QYMF).